We begin with the raw amino-acid sequence, 808 residues long: Anaphase-promoting complex subunit 4 (808 aa).

Tyr-469 is subject to Phosphotyrosine. Phosphoserine is present on residues Ser-757 and Ser-758. Residue Lys-772 forms a Glycyl lysine isopeptide (Lys-Gly) (interchain with G-Cter in SUMO2) linkage. Residues Ser-777 and Ser-779 each carry the phosphoserine modification. Lys-798 participates in a covalent cross-link: Glycyl lysine isopeptide (Lys-Gly) (interchain with G-Cter in SUMO2).

This sequence belongs to the APC4 family. In terms of assembly, the mammalian APC/C is composed at least of 14 distinct subunits ANAPC1, ANAPC2, CDC27/APC3, ANAPC4, ANAPC5, CDC16/APC6, ANAPC7, CDC23/APC8, ANAPC10, ANAPC11, CDC26/APC12, ANAPC13, ANAPC15 and ANAPC16 that assemble into a complex of at least 19 chains with a combined molecular mass of around 1.2 MDa; APC/C interacts with FZR1 and FBXO5. In the context of the APC/C complex, directly interacts with UBE2S. Interacts with FBXO43.

It localises to the nucleus. The protein operates within protein modification; protein ubiquitination. Its function is as follows. Component of the anaphase promoting complex/cyclosome (APC/C), a cell cycle-regulated E3 ubiquitin ligase that controls progression through mitosis and the G1 phase of the cell cycle. The APC/C complex acts by mediating ubiquitination and subsequent degradation of target proteins: it mainly mediates the formation of 'Lys-11'-linked polyubiquitin chains and, to a lower extent, the formation of 'Lys-48'- and 'Lys-63'-linked polyubiquitin chains. The APC/C complex catalyzes assembly of branched 'Lys-11'-/'Lys-48'-linked branched ubiquitin chains on target proteins. This chain is Anaphase-promoting complex subunit 4 (ANAPC4), found in Homo sapiens (Human).